Here is a 194-residue protein sequence, read N- to C-terminus: Fibroblast growth factor 7 (194 aa).

The first 31 residues, 1–31 (MRKWILTWILPTLLYRSCFHIICLVGTISLA), serve as a signal peptide directing secretion. An N-linked (GlcNAc...) asparagine glycan is attached at asparagine 45.

Belongs to the heparin-binding growth factors family. As to quaternary structure, interacts with FGFBP1. Interacts with FGFR2. Affinity between fibroblast growth factors (FGFs) and their receptors is increased by heparan sulfate glycosaminoglycans that function as coreceptors.

It is found in the secreted. Its function is as follows. Plays an important role in the regulation of embryonic development, cell proliferation and cell differentiation. Required for normal branching morphogenesis. Growth factor active on keratinocytes. Possible major paracrine effector of normal epithelial cell proliferation. In Canis lupus familiaris (Dog), this protein is Fibroblast growth factor 7 (FGF7).